The following is a 267-amino-acid chain: Undecaprenyl-diphosphatase 2 (267 aa).

8 helical membrane passes run 4-24, 43-63, 84-104, 109-129, 147-167, 186-206, 219-239, and 243-263; these read IYFI…FLPI, EEKV…CWLF, FAVI…LFIH, VLFN…IILW, IGFK…IPGT, AATE…AIYD, ILAI…VVNA, and FVAK…GLII.

Belongs to the UppP family.

The protein resides in the cell inner membrane. It carries out the reaction di-trans,octa-cis-undecaprenyl diphosphate + H2O = di-trans,octa-cis-undecaprenyl phosphate + phosphate + H(+). Catalyzes the dephosphorylation of undecaprenyl diphosphate (UPP). Confers resistance to bacitracin. In Shewanella oneidensis (strain ATCC 700550 / JCM 31522 / CIP 106686 / LMG 19005 / NCIMB 14063 / MR-1), this protein is Undecaprenyl-diphosphatase 2.